The chain runs to 674 residues: ATP-dependent DNA helicase Rep (674 aa).

The 280-residue stretch at 1 to 280 (MRLNPGQQHA…IKLEQNYRSS (280 aa)) folds into the UvrD-like helicase ATP-binding domain. Residues 22-29 (AGAGSGKT) and Arg-278 each bind ATP. In terms of domain architecture, UvrD-like helicase C-terminal spans 281-562 (GRILKAANIL…QLMTLHASKG (282 aa)).

The protein belongs to the helicase family. UvrD subfamily. In terms of assembly, homodimer.

The enzyme catalyses Couples ATP hydrolysis with the unwinding of duplex DNA by translocating in the 3'-5' direction.. It carries out the reaction ATP + H2O = ADP + phosphate + H(+). Functionally, rep helicase is a single-stranded DNA-dependent ATPase involved in DNA replication; it can initiate unwinding at a nick in the DNA. It binds to the single-stranded DNA and acts in a progressive fashion along the DNA in the 3' to 5' direction. The chain is ATP-dependent DNA helicase Rep from Salmonella typhimurium (strain LT2 / SGSC1412 / ATCC 700720).